A 235-amino-acid chain; its full sequence is FsC-acetyl coenzyme A-N(2)-transacetylase (235 aa).

Residues 14–190 (LELVPLGHEH…RYSITREEWL (177 aa)) form the N-acetyltransferase domain. CoA is bound by residues 106 to 108 (FRV), G114, N146, and 151 to 153 (AVM).

It participates in siderophore biosynthesis. Its function is as follows. FsC-acetyl coenzyme A-N(2)-transacetylase; part of the siderophore biosynthetic pathway. Aspergillus fumigatus produces 4 types of siderophores, low-molecular-mass iron chelators, including excreted fusarinine C (FsC) and triacetylfusarinine C (TAFC) for iron uptake and intacellular ferricrocin (FC) for hyphal and hydroxyferricrocin (HFC) for conidial iron distribution and storage. TAFC consists of 3 N(2)-acetyl-N(5)-anhydromevalonyl-N(5)-hydroxyornithine residues cyclically linked by ester bonds; FC is a cyclic hexapeptide with the structure Gly-Ser-Gly-(N(5)-acetyl-N(5)-hydroxyornithine)x3. The biosynthesis of all four siderophores depends on the hydroxylation of ornithine, catalyzed by the monooxygenase sidA. Subsequently, the pathways for biosynthesis of extra- and intracellular siderophores split. For biosynthesis of extracellular siderophores, the transacylase sidF transfers anhydromevalonyl to N(5)-hydroxyornithine. The required anhydromevalonyl-CoA moiety is derived from mevalonate by CoA ligation and dehydration catalyzed by sidI and sidH respectively. The acetylation of N(5)-hydroxyornithine for FC biosynthesis involves the constitutively expressed sidL. FC is hydroxylated to HFC by an as yet uncharacterized enzyme during conidiation. Assembly of fusarinine C (FsC) and FC is catalyzed by two different nonribosomal peptide synthetases (NRPS), sidD and sidC respectively. Subsequently, sidG catalyzes N2-acetylation of FsC for forming TAFC. Both extra- and intracellular siderophores are crucial for growth during iron limitation and virulence. This chain is FsC-acetyl coenzyme A-N(2)-transacetylase, found in Aspergillus fumigatus (strain ATCC MYA-4609 / CBS 101355 / FGSC A1100 / Af293) (Neosartorya fumigata).